We begin with the raw amino-acid sequence, 316 residues long: Ornithine carbamoyltransferase (316 aa).

Carbamoyl phosphate is bound by residues 59-62 (STRT), Q86, R110, and 137-140 (HPCQ). L-ornithine-binding positions include N168, D232, and 236 to 237 (SM). Carbamoyl phosphate-binding positions include 273–274 (CL) and R301.

Belongs to the aspartate/ornithine carbamoyltransferase superfamily. OTCase family.

The protein resides in the cytoplasm. It catalyses the reaction carbamoyl phosphate + L-ornithine = L-citrulline + phosphate + H(+). The protein operates within amino-acid biosynthesis; L-arginine biosynthesis; L-arginine from L-ornithine and carbamoyl phosphate: step 1/3. Reversibly catalyzes the transfer of the carbamoyl group from carbamoyl phosphate (CP) to the N(epsilon) atom of ornithine (ORN) to produce L-citrulline. This chain is Ornithine carbamoyltransferase, found in Listeria monocytogenes serotype 4b (strain F2365).